We begin with the raw amino-acid sequence, 483 residues long: UDP-N-acetylmuramoylalanine--D-glutamate ligase (483 aa).

Position 119–125 (119–125 (GTNGKTT)) interacts with ATP.

Belongs to the MurCDEF family.

The protein localises to the cytoplasm. It carries out the reaction UDP-N-acetyl-alpha-D-muramoyl-L-alanine + D-glutamate + ATP = UDP-N-acetyl-alpha-D-muramoyl-L-alanyl-D-glutamate + ADP + phosphate + H(+). It participates in cell wall biogenesis; peptidoglycan biosynthesis. Cell wall formation. Catalyzes the addition of glutamate to the nucleotide precursor UDP-N-acetylmuramoyl-L-alanine (UMA). The protein is UDP-N-acetylmuramoylalanine--D-glutamate ligase of Mycolicibacterium vanbaalenii (strain DSM 7251 / JCM 13017 / BCRC 16820 / KCTC 9966 / NRRL B-24157 / PYR-1) (Mycobacterium vanbaalenii).